Consider the following 81-residue polypeptide: Protein PYP1 (81 aa).

Residues 1 to 25 (MAFVSGFTGMPVTARVSKAVCRTRM) constitute a chloroplast transit peptide. The tract at residues 27-57 (LEGGKSSGGGEATRDPEPTAVDPNDPKGKQQ) is disordered.

The protein localises to the plastid. It localises to the chloroplast. The protein is Protein PYP1 of Pyropia yezoensis (Susabi-nori).